A 216-amino-acid polypeptide reads, in one-letter code: Glutathione S-transferase 1, isoform B (216 aa).

The GST N-terminal domain maps to 1–80; the sequence is MDFYYLPGSA…YLVEKYGKPC (80 aa). Glutathione-binding positions include S9, 50 to 52, and 64 to 66; these read HCV and ESR. The region spanning 89-210 is the GST C-terminal domain; it reads DPQKRAIVNQ…RSWAEAARPF (122 aa).

It belongs to the GST superfamily. Theta family. Homodimer.

It carries out the reaction RX + glutathione = an S-substituted glutathione + a halide anion + H(+). In terms of biological role, conjugation of reduced glutathione to a wide number of exogenous and endogenous hydrophobic electrophiles. This Anopheles gambiae (African malaria mosquito) protein is Glutathione S-transferase 1, isoform B.